Reading from the N-terminus, the 514-residue chain is Na(+)/H(+) antiporter NhaB (514 aa).

The next 12 helical transmembrane spans lie at 23 to 43, 63 to 83, 97 to 117, 120 to 140, 144 to 164, 202 to 222, 238 to 258, 303 to 323, 357 to 377, 391 to 411, 447 to 467, and 475 to 495; these read LALL…PFIA, PLLP…TSAA, LLLM…LFIF, LLLS…AAAF, FLDA…FYGI, LMMH…VGEP, FFLR…LTCM, AIIG…VGLI, LTVF…APII, LFYL…VGTI, ATPN…APLI, and VWMA…CVEF.

This sequence belongs to the NhaB Na(+)/H(+) (TC 2.A.34) antiporter family.

The protein localises to the cell inner membrane. It carries out the reaction 2 Na(+)(in) + 3 H(+)(out) = 2 Na(+)(out) + 3 H(+)(in). Functionally, na(+)/H(+) antiporter that extrudes sodium in exchange for external protons. This Salmonella paratyphi B (strain ATCC BAA-1250 / SPB7) protein is Na(+)/H(+) antiporter NhaB.